We begin with the raw amino-acid sequence, 168 residues long: uncharacterized protein (168 aa).

This is an uncharacterized protein from Mycoplasma pneumoniae (strain ATCC 29342 / M129 / Subtype 1) (Mycoplasmoides pneumoniae).